A 262-amino-acid chain; its full sequence is Tryptophan synthase alpha chain (262 aa).

Active-site proton acceptor residues include E49 and D60.

Belongs to the TrpA family. In terms of assembly, tetramer of two alpha and two beta chains.

The catalysed reaction is (1S,2R)-1-C-(indol-3-yl)glycerol 3-phosphate + L-serine = D-glyceraldehyde 3-phosphate + L-tryptophan + H2O. The protein operates within amino-acid biosynthesis; L-tryptophan biosynthesis; L-tryptophan from chorismate: step 5/5. Functionally, the alpha subunit is responsible for the aldol cleavage of indoleglycerol phosphate to indole and glyceraldehyde 3-phosphate. The sequence is that of Tryptophan synthase alpha chain from Thermoanaerobacter sp. (strain X514).